Reading from the N-terminus, the 351-residue chain is Nicotinate-nucleotide--dimethylbenzimidazole phosphoribosyltransferase (351 aa).

The active-site Proton acceptor is E317.

The protein belongs to the CobT family.

The enzyme catalyses 5,6-dimethylbenzimidazole + nicotinate beta-D-ribonucleotide = alpha-ribazole 5'-phosphate + nicotinate + H(+). Its pathway is nucleoside biosynthesis; alpha-ribazole biosynthesis; alpha-ribazole from 5,6-dimethylbenzimidazole: step 1/2. Catalyzes the synthesis of alpha-ribazole-5'-phosphate from nicotinate mononucleotide (NAMN) and 5,6-dimethylbenzimidazole (DMB). The sequence is that of Nicotinate-nucleotide--dimethylbenzimidazole phosphoribosyltransferase from Pseudomonas fluorescens (strain SBW25).